The primary structure comprises 358 residues: Peptide chain release factor 1 (358 aa).

Gln233 is subject to N5-methylglutamine.

Belongs to the prokaryotic/mitochondrial release factor family. In terms of processing, methylated by PrmC. Methylation increases the termination efficiency of RF1.

It localises to the cytoplasm. In terms of biological role, peptide chain release factor 1 directs the termination of translation in response to the peptide chain termination codons UAG and UAA. In Listeria monocytogenes serotype 4b (strain CLIP80459), this protein is Peptide chain release factor 1.